Reading from the N-terminus, the 80-residue chain is FXYD domain-containing ion transport regulator 7 (80 aa).

Residues 1 to 22 (MATPTQSPTNVPEETDPFFYDY) lie on the Extracellular side of the membrane. O-linked (GlcNAc) threonine glycosylation is found at Thr3, Thr5, and Thr9. The chain crosses the membrane as a helical span at residues 23-45 (ATVQTVGMTLATIMFVLGIIIIL). Over 46 to 80 (SKKVKCRKADSRSESPTCKSCKSELPSSAPGGGGV) the chain is Cytoplasmic. The segment at 55–80 (DSRSESPTCKSCKSELPSSAPGGGGV) is disordered. Ser73 is modified (phosphoserine).

The protein belongs to the FXYD family. As to quaternary structure, regulatory subunit of the sodium/potassium-transporting ATPase which is composed of a catalytic alpha subunit, a non-catalytic beta subunit and an additional regulatory subunit. The regulatory subunit, a member of the FXYD protein family, modulates the enzymatic activity in a tissue- and isoform-specific way by changing affinities of the Na+/K+-ATPase toward Na(+), K(+) or ATP. In terms of processing, O-glycosylated; required for stabilization and translocation to the plasma membrane.

The protein localises to the cell membrane. Associates with and regulates the activity of the sodium/potassium-transporting ATPase (NKA) which catalyzes the hydrolysis of ATP coupled with the exchange of Na(+) and K(+) ions across the plasma membrane. Reduces the apparent affinity for external K(+), an effect that depends on the presence of external Na(+) and voltage. Increases the apparent affinity for intracellular Na(+). This is FXYD domain-containing ion transport regulator 7 (Fxyd7) from Mus musculus (Mouse).